The primary structure comprises 29 residues: Galanin (29 aa).

Residue Ala29 is modified to Alanine amide.

It belongs to the galanin family.

It is found in the secreted. In terms of biological role, contracts smooth muscle of the gastrointestinal and genitourinary tract, regulates growth hormone release, modulates insulin release, and may be involved in the control of adrenal secretion. The sequence is that of Galanin (gal) from Pelophylax ridibundus (Marsh frog).